We begin with the raw amino-acid sequence, 112 residues long: Cytochrome c type-1 (112 aa).

C20, C23, H24, and M85 together coordinate heme c.

Post-translationally, binds 1 heme c group covalently per subunit.

It localises to the mitochondrion intermembrane space. In terms of biological role, electron carrier between complex III (ubiquinol-cytochrome c oxireductase) and complex IV (cytochrome c oxidase). The sequence is that of Cytochrome c type-1 from Ascaris suum (Pig roundworm).